We begin with the raw amino-acid sequence, 365 residues long: 3-isopropylmalate dehydrogenase (365 aa).

G78–E91 is an NAD(+) binding site. Residues R99, R109, R138, and D227 each coordinate substrate. 3 residues coordinate Mg(2+): D227, D251, and D255. G285–N297 serves as a coordination point for NAD(+).

The protein belongs to the isocitrate and isopropylmalate dehydrogenases family. LeuB type 1 subfamily. As to quaternary structure, homodimer. Mg(2+) serves as cofactor. Requires Mn(2+) as cofactor.

The protein resides in the cytoplasm. The catalysed reaction is (2R,3S)-3-isopropylmalate + NAD(+) = 4-methyl-2-oxopentanoate + CO2 + NADH. It functions in the pathway amino-acid biosynthesis; L-leucine biosynthesis; L-leucine from 3-methyl-2-oxobutanoate: step 3/4. Catalyzes the oxidation of 3-carboxy-2-hydroxy-4-methylpentanoate (3-isopropylmalate) to 3-carboxy-4-methyl-2-oxopentanoate. The product decarboxylates to 4-methyl-2 oxopentanoate. The polypeptide is 3-isopropylmalate dehydrogenase (Syntrophotalea carbinolica (strain DSM 2380 / NBRC 103641 / GraBd1) (Pelobacter carbinolicus)).